The sequence spans 153 residues: Ribosome maturation factor RimP (153 aa).

Belongs to the RimP family.

It is found in the cytoplasm. In terms of biological role, required for maturation of 30S ribosomal subunits. This is Ribosome maturation factor RimP from Coxiella burnetii (strain CbuK_Q154) (Coxiella burnetii (strain Q154)).